A 62-amino-acid polypeptide reads, in one-letter code: Conotoxin TsMLCL-02 (62 aa).

Positions 1–19 (MLCLPVFIILLLLASPAAP) are cleaved as a signal peptide. The propeptide occupies 20-54 (NPLERRIQSDLIRAALEDADMKTEKGILSSIMGTL).

Belongs to the conotoxin T superfamily. Expressed by the venom duct.

Its subcellular location is the secreted. The sequence is that of Conotoxin TsMLCL-02 from Conus tessulatus (Tessellate cone).